The following is a 103-amino-acid chain: MQNQKIRIRLKAFDYRLIDQSAAEIVETAKRTGAIVKGPVPLPTRIQRFDVLRSPHVNKTSRDQFEIRTHQRLMDIVDPTDKTVDALMKLDLPAGVDVEIKLQ.

This sequence belongs to the universal ribosomal protein uS10 family. As to quaternary structure, part of the 30S ribosomal subunit.

Involved in the binding of tRNA to the ribosomes. The sequence is that of Small ribosomal subunit protein uS10 from Ralstonia pickettii (strain 12J).